Reading from the N-terminus, the 96-residue chain is Muconolactone Delta-isomerase 1 (96 aa).

This sequence belongs to the muconolactone Delta-isomerase family. Homodecamer.

It catalyses the reaction (S)-muconolactone = (4,5-dihydro-5-oxofuran-2-yl)-acetate. Its pathway is aromatic compound metabolism; beta-ketoadipate pathway; 5-oxo-4,5-dihydro-2-furylacetate from catechol: step 3/3. The sequence is that of Muconolactone Delta-isomerase 1 (catC1) from Acinetobacter lwoffii.